The sequence spans 126 residues: Putative lipoprotein LprD (126 aa).

A signal peptide spans Met1–Gly21. Cys22 is lipidated: N-palmitoyl cysteine. Cys22 carries S-diacylglycerol cysteine lipidation. The chain crosses the membrane as a helical span at residues Phe40–Tyr60. A disordered region spans residues Pro70–Pro101.

This sequence to M.leprae ML1177.

It localises to the cell membrane. This chain is Putative lipoprotein LprD (lprD), found in Mycobacterium tuberculosis (strain CDC 1551 / Oshkosh).